A 330-amino-acid polypeptide reads, in one-letter code: MDSLINEIKSAQSSAELEELRIKALGKKGILTAQFALLKNLDEEEKKEKAKELNQLKGEFEREWTLKKEIIATEELHKKLLEEKVDMTLFAPSKGVGSAHPVMITMERIVDYFVSLNFAIKSGPLIEDDFHNFEALNLPKYHPARDMQDTFYFKDGMLLRTHTSPVQIRTMEKETPPIRMICPGAVFRRDYDLTHTPMFHQVEGLVVEEEGKVSFANLKYILEDFLRFMFGEVQVRFRTSFFPFTEPSAEVDISCIFCHGEGCRVCSHTGWLEVLGCGLVDENVFKAVGYKNVSGYAFGLGVERFAMLIHAVSDLRAFFESDLRVLEQFR.

Glu-246 is a Mg(2+) binding site.

This sequence belongs to the class-II aminoacyl-tRNA synthetase family. Phe-tRNA synthetase alpha subunit type 1 subfamily. Tetramer of two alpha and two beta subunits. Mg(2+) is required as a cofactor.

The protein localises to the cytoplasm. It carries out the reaction tRNA(Phe) + L-phenylalanine + ATP = L-phenylalanyl-tRNA(Phe) + AMP + diphosphate + H(+). This Wolinella succinogenes (strain ATCC 29543 / DSM 1740 / CCUG 13145 / JCM 31913 / LMG 7466 / NCTC 11488 / FDC 602W) (Vibrio succinogenes) protein is Phenylalanine--tRNA ligase alpha subunit.